We begin with the raw amino-acid sequence, 206 residues long: Glycerol-3-phosphate acyltransferase (206 aa).

6 helical membrane passes run 6–26 (IFLA…PSGF), 57–77 (KAAL…ILIA), 86–106 (FHVI…WLNW), 118–138 (VFLG…MAVL), 143–163 (IVSL…FLSL), and 165–185 (EASF…MVLW).

Belongs to the PlsY family. In terms of assembly, probably interacts with PlsX.

The protein localises to the cell inner membrane. The enzyme catalyses an acyl phosphate + sn-glycerol 3-phosphate = a 1-acyl-sn-glycero-3-phosphate + phosphate. It participates in lipid metabolism; phospholipid metabolism. Catalyzes the transfer of an acyl group from acyl-phosphate (acyl-PO(4)) to glycerol-3-phosphate (G3P) to form lysophosphatidic acid (LPA). This enzyme utilizes acyl-phosphate as fatty acyl donor, but not acyl-CoA or acyl-ACP. This is Glycerol-3-phosphate acyltransferase from Prochlorococcus marinus (strain MIT 9211).